The primary structure comprises 675 residues: L-type lectin-domain containing receptor kinase IV.1 (675 aa).

The first 22 residues, 1-22 (MFLKLLTIFFFFFFNLIFQSSS), serve as a signal peptide directing secretion. Residues 23–291 (QSLNFAYNNG…EPKRISEFYK (269 aa)) lie on the Extracellular side of the membrane. A legume-lectin like region spans residues 25-261 (LNFAYNNGFN…SEHYILGWSF (237 aa)). 6 N-linked (GlcNAc...) asparagine glycosylation sites follow: asparagine 57, asparagine 79, asparagine 112, asparagine 134, asparagine 153, and asparagine 186. A helical transmembrane segment spans residues 292-312 (IGMPLISLFLIFSFIFLVCYI). Residues 313–675 (VRRRRKFAEE…IADSQLSGGR (363 aa)) are Cytoplasmic-facing. The Protein kinase domain maps to 347-624 (FKEKGLLGTG…LHYLRGDAKL (278 aa)). ATP is bound by residues 353 to 361 (LGTGGFGSV) and lysine 376. Aspartate 472 functions as the Proton acceptor in the catalytic mechanism.

It in the C-terminal section; belongs to the protein kinase superfamily. Ser/Thr protein kinase family. In the N-terminal section; belongs to the leguminous lectin family.

The protein localises to the membrane. It carries out the reaction L-seryl-[protein] + ATP = O-phospho-L-seryl-[protein] + ADP + H(+). The enzyme catalyses L-threonyl-[protein] + ATP = O-phospho-L-threonyl-[protein] + ADP + H(+). The chain is L-type lectin-domain containing receptor kinase IV.1 (LECRK41) from Arabidopsis thaliana (Mouse-ear cress).